Consider the following 276-residue polypeptide: Potassium/proton antiporter CemA (276 aa).

The next 3 helical transmembrane spans lie at Leu-59–Gly-79, Phe-199–Val-219, and Phe-236–Ile-256.

Belongs to the CemA family.

Its subcellular location is the plastid. The protein localises to the chloroplast inner membrane. The enzyme catalyses K(+)(in) + H(+)(out) = K(+)(out) + H(+)(in). In terms of biological role, contributes to K(+)/H(+) antiport activity by supporting proton efflux to control proton extrusion and homeostasis in chloroplasts in a light-dependent manner to modulate photosynthesis. Prevents excessive induction of non-photochemical quenching (NPQ) under continuous-light conditions. Indirectly promotes efficient inorganic carbon uptake into chloroplasts. In Cyanidioschyzon merolae (strain NIES-3377 / 10D) (Unicellular red alga), this protein is Potassium/proton antiporter CemA.